A 93-amino-acid chain; its full sequence is M-zodatoxin-Lt5a (93 aa).

The signal sequence occupies residues 1–22 (MKYCVVILALLVALVCITESRS). The propeptide occupies 23 to 64 (TETGYAVAETLEDNDLDELQAYLEEIAEASEMEDFSNIEEAR). The Processing quadruplet motif signature appears at 61 to 64 (EEAR). Leu92 is modified (leucine amide).

Post-translationally, cleavage of the propeptide depends on the processing quadruplet motif (XXXR, with at least one of X being E). Expressed by the venom gland.

It localises to the secreted. Functionally, has antimicrobial activity against. Gram-positive bacteria (A.globiformis VKM Ac-1112 (MIC=1.1 uM), and B.subtilis VKM B-501 (MIC=0.6 uM)), Gram-negative bacteria (E.coli DH5-alpha (MIC=0.6 uM), E.coli MH1 (MIC=0.6 uM), and P.aeruginosa PAO1 (MIC=18 uM)), and yeasts (P.pastoris GS115 (MIC&gt;37 uM), and S.cerevisiae Y190 (MIC&gt;37 uM)). Also has a moderate hemolytic activity against rabbit erythrocytes. Causes paralysis, but is not lethal when injected into insect (M.domestica) larvae. This Lachesana tarabaevi (Spider) protein is M-zodatoxin-Lt5a.